A 493-amino-acid polypeptide reads, in one-letter code: Protein nucleotidyltransferase YdiU (493 aa).

ATP is bound by residues G81, G83, R84, K103, D115, G116, R166, and R173. The active-site Proton acceptor is the D244. Positions 245 and 254 each coordinate Mg(2+). D254 contributes to the ATP binding site.

The protein belongs to the SELO family. The cofactor is Mg(2+). It depends on Mn(2+) as a cofactor.

The enzyme catalyses L-seryl-[protein] + ATP = 3-O-(5'-adenylyl)-L-seryl-[protein] + diphosphate. It catalyses the reaction L-threonyl-[protein] + ATP = 3-O-(5'-adenylyl)-L-threonyl-[protein] + diphosphate. It carries out the reaction L-tyrosyl-[protein] + ATP = O-(5'-adenylyl)-L-tyrosyl-[protein] + diphosphate. The catalysed reaction is L-histidyl-[protein] + UTP = N(tele)-(5'-uridylyl)-L-histidyl-[protein] + diphosphate. The enzyme catalyses L-seryl-[protein] + UTP = O-(5'-uridylyl)-L-seryl-[protein] + diphosphate. It catalyses the reaction L-tyrosyl-[protein] + UTP = O-(5'-uridylyl)-L-tyrosyl-[protein] + diphosphate. In terms of biological role, nucleotidyltransferase involved in the post-translational modification of proteins. It can catalyze the addition of adenosine monophosphate (AMP) or uridine monophosphate (UMP) to a protein, resulting in modifications known as AMPylation and UMPylation. This chain is Protein nucleotidyltransferase YdiU, found in Shewanella frigidimarina (strain NCIMB 400).